The following is an 850-amino-acid chain: Ras GTPase-activating protein 2 (850 aa).

Positions 1 to 24 (MAAAAPAAAAASSEAPAASATAEP) are enriched in low complexity. The segment at 1–32 (MAAAAPAAAAASSEAPAASATAEPEAGDQDSR) is disordered. Alanine 2 carries the N-acetylalanine modification. C2 domains lie at 20–138 (ATAE…ETWF) and 149–289 (VQGK…QAWY). The region spanning 372–589 (DKLVPFATAV…IAVKKFLDEI (218 aa)) is the Ras-GAP domain. Serine 555 carries the post-translational modification Phosphoserine. The region spanning 604–706 (VHLKEGEMYK…WIDVLCRVSR (103 aa)) is the PH domain. Residues 708-744 (NQNRLSFYHPSVYLNGNWLCCQETGENTLGCKPCTAG) form a Btk-type zinc finger. Residues histidine 716, cysteine 727, cysteine 728, and cysteine 738 each contribute to the Zn(2+) site. Positions 825–850 (HEKYRKKRSSSAKYGSKENPIVGKAS) are disordered.

It is found in the cytoplasm. The protein resides in the perinuclear region. In terms of biological role, inhibitory regulator of the Ras-cyclic AMP pathway. Binds inositol tetrakisphosphate (IP4). This chain is Ras GTPase-activating protein 2 (RASA2), found in Homo sapiens (Human).